The primary structure comprises 249 residues: Small ribosomal subunit protein eS6 (249 aa).

A Glycyl lysine isopeptide (Lys-Gly) (interchain with G-Cter in SUMO2) cross-link involves residue lysine 14. At glutamate 35 the chain carries ADP-ribosyl glutamic acid. The residue at position 137 (arginine 137) is a (3R)-3-hydroxyarginine. Serine 148 is subject to Phosphoserine. Position 211 is an N6-acetyllysine (lysine 211). Positions 217-229 (MKEAKEKRQEQIA) are enriched in basic and acidic residues. A disordered region spans residues 217 to 249 (MKEAKEKRQEQIAKRRRLSSLRASTSKSESSQK). Residues serine 235 and serine 236 each carry the phosphoserine; by RPS6KA1, RPS6KA3, DAPK1 and PASK modification. Over residues 236 to 249 (SLRASTSKSESSQK) the composition is skewed to low complexity. Serine 240, serine 242, serine 244, and serine 247 each carry phosphoserine.

This sequence belongs to the eukaryotic ribosomal protein eS6 family. In terms of assembly, component of the small ribosomal subunit. Part of the small subunit (SSU) processome, composed of more than 70 proteins and the RNA chaperone small nucleolar RNA (snoRNA) U3. In terms of processing, ribosomal protein S6 is the major substrate of protein kinases in eukaryote ribosomes. The phosphorylation is stimulated by growth factors, tumor promoting agents, and mitogens. It is dephosphorylated at growth arrest. Phosphorylated at Ser-235 and Ser-236 by RPS6KA1 and RPS6KA3; phosphorylation at these sites facilitates the assembly of the pre-initiation complex. Specifically hydroxylated (with R stereochemistry) at C-3 of Arg-137 by KDM8. Post-translationally, mono-ADP-ribosylation at Glu-35 by PARP16 inhibits polysome assembly and mRNA loading, thereby inhibiting protein translation.

It localises to the cytoplasm. Its subcellular location is the nucleus. The protein localises to the nucleolus. Functionally, component of the 40S small ribosomal subunit. Plays an important role in controlling cell growth and proliferation through the selective translation of particular classes of mRNA. Part of the small subunit (SSU) processome, first precursor of the small eukaryotic ribosomal subunit. During the assembly of the SSU processome in the nucleolus, many ribosome biogenesis factors, an RNA chaperone and ribosomal proteins associate with the nascent pre-rRNA and work in concert to generate RNA folding, modifications, rearrangements and cleavage as well as targeted degradation of pre-ribosomal RNA by the RNA exosome. This is Small ribosomal subunit protein eS6 (RPS6) from Bos taurus (Bovine).